Here is a 642-residue protein sequence, read N- to C-terminus: Threonine--tRNA ligase (642 aa).

The region spanning 1–61 (MPVITLPDGS…SEDANLVIFT (61 aa)) is the TGS domain. The interval 243–534 (DHRKLAKKFD…LIEHYEGSFP (292 aa)) is catalytic. Zn(2+) contacts are provided by C334, H385, and H511.

It belongs to the class-II aminoacyl-tRNA synthetase family. In terms of assembly, homodimer. It depends on Zn(2+) as a cofactor.

It is found in the cytoplasm. It carries out the reaction tRNA(Thr) + L-threonine + ATP = L-threonyl-tRNA(Thr) + AMP + diphosphate + H(+). In terms of biological role, catalyzes the attachment of threonine to tRNA(Thr) in a two-step reaction: L-threonine is first activated by ATP to form Thr-AMP and then transferred to the acceptor end of tRNA(Thr). Also edits incorrectly charged L-seryl-tRNA(Thr). This chain is Threonine--tRNA ligase, found in Cellvibrio japonicus (strain Ueda107) (Pseudomonas fluorescens subsp. cellulosa).